The chain runs to 320 residues: Aspartate carbamoyltransferase catalytic subunit (320 aa).

Residues arginine 57 and threonine 58 each coordinate carbamoyl phosphate. Lysine 85 is an L-aspartate binding site. Carbamoyl phosphate contacts are provided by arginine 107, histidine 141, and glutamine 144. Arginine 174 and arginine 228 together coordinate L-aspartate. Positions 269 and 270 each coordinate carbamoyl phosphate.

This sequence belongs to the aspartate/ornithine carbamoyltransferase superfamily. ATCase family. Heterododecamer (2C3:3R2) of six catalytic PyrB chains organized as two trimers (C3), and six regulatory PyrI chains organized as three dimers (R2).

It catalyses the reaction carbamoyl phosphate + L-aspartate = N-carbamoyl-L-aspartate + phosphate + H(+). The protein operates within pyrimidine metabolism; UMP biosynthesis via de novo pathway; (S)-dihydroorotate from bicarbonate: step 2/3. Catalyzes the condensation of carbamoyl phosphate and aspartate to form carbamoyl aspartate and inorganic phosphate, the committed step in the de novo pyrimidine nucleotide biosynthesis pathway. The polypeptide is Aspartate carbamoyltransferase catalytic subunit (Mycobacterium ulcerans (strain Agy99)).